Reading from the N-terminus, the 244-residue chain is Zinc import ATP-binding protein ZnuC 2 (244 aa).

The ABC transporter domain occupies 3–218; the sequence is IGCASLTIQL…PEYLALFGID (216 aa). Position 35 to 42 (35 to 42) interacts with ATP; it reads GPNGSGKT.

Belongs to the ABC transporter superfamily. Zinc importer (TC 3.A.1.15.5) family. In terms of assembly, the complex is composed of two ATP-binding proteins (ZnuC), two transmembrane proteins (ZnuB) and a solute-binding protein (ZnuA).

The protein localises to the cell inner membrane. It carries out the reaction Zn(2+)(out) + ATP(in) + H2O(in) = Zn(2+)(in) + ADP(in) + phosphate(in) + H(+)(in). Part of the ABC transporter complex ZnuABC involved in zinc import. Responsible for energy coupling to the transport system. This chain is Zinc import ATP-binding protein ZnuC 2, found in Hahella chejuensis (strain KCTC 2396).